A 595-amino-acid chain; its full sequence is Protein alan shepard (595 aa).

The span at 1-12 (MHPRYSPAPPPH) shows a compositional bias: pro residues. Positions 1–82 (MHPRYSPAPP…ASVAAAPPTP (82 aa)) are disordered. Tyr-5 is subject to Phosphotyrosine. The segment covering 13-31 (QQQQQQQQQPMGGPHQQQS) has biased composition (low complexity). Residues 32 to 43 (AGGGPGHGGGAS) are compositionally biased toward gly residues. Residues 50–68 (PNSQQLPPQMPRSQNYANG) are compositionally biased toward polar residues. The span at 69–78 (SSSAASVAAA) shows a compositional bias: low complexity. A phosphotyrosine mark is found at Tyr-138 and Tyr-154. A disordered region spans residues 184-238 (RVPTAASPSNTNSSSSSNTGSQSGTLSTSLSNTTNTNTTMGPNGTAQNQNQQGGE). A compositionally biased stretch (low complexity) spans 190-238 (SPSNTNSSSSSNTGSQSGTLSTSLSNTTNTNTTMGPNGTAQNQNQQGGE). 2 consecutive RRM domains span residues 243–316 (TNLY…MAKQ) and 322–401 (TNLY…FADG). Residues 569–595 (MTDSEQASTAASPDEAYTQYPHQAAPK) form a disordered region.

In terms of biological role, has a role in the perception of gravity. The polypeptide is Protein alan shepard (Drosophila virilis (Fruit fly)).